A 160-amino-acid polypeptide reads, in one-letter code: 2-C-methyl-D-erythritol 2,4-cyclodiphosphate synthase (160 aa).

A divalent metal cation-binding residues include aspartate 8 and histidine 10. 4-CDP-2-C-methyl-D-erythritol 2-phosphate-binding positions include 8–10 and 34–35; these read DVH and HS. Histidine 42 is a binding site for a divalent metal cation. Residues 56–58, 61–65, 100–106, 132–135, phenylalanine 139, and arginine 142 contribute to the 4-CDP-2-C-methyl-D-erythritol 2-phosphate site; these read DIG, FPDTD, AQAPKML, and TTTE.

The protein belongs to the IspF family. In terms of assembly, homotrimer. Requires a divalent metal cation as cofactor.

The enzyme catalyses 4-CDP-2-C-methyl-D-erythritol 2-phosphate = 2-C-methyl-D-erythritol 2,4-cyclic diphosphate + CMP. It participates in isoprenoid biosynthesis; isopentenyl diphosphate biosynthesis via DXP pathway; isopentenyl diphosphate from 1-deoxy-D-xylulose 5-phosphate: step 4/6. Involved in the biosynthesis of isopentenyl diphosphate (IPP) and dimethylallyl diphosphate (DMAPP), two major building blocks of isoprenoid compounds. Catalyzes the conversion of 4-diphosphocytidyl-2-C-methyl-D-erythritol 2-phosphate (CDP-ME2P) to 2-C-methyl-D-erythritol 2,4-cyclodiphosphate (ME-CPP) with a corresponding release of cytidine 5-monophosphate (CMP). The polypeptide is 2-C-methyl-D-erythritol 2,4-cyclodiphosphate synthase (Proteus mirabilis (strain HI4320)).